The chain runs to 261 residues: MKYYGKCISYISILILTFFIGGCGFMNKENNKEAEIKESFHKTLSMYPIKNLEDLYDKEGYRDEEFEKRDKGTWIINSVMNIQKKGQAMESRGMVLYMNRNTRKTTGHFYTSITTEDKKGRVYNKEKNTLFNLKNNKIEPTKPIVDETLKNEIKNFQFFSQYGNFKNLKDYKNGNVSYNPNVPSYSAEYQLSNEDDNVKQLRKKYDIPTKKAPKLILKGDGDLKGSSIGHKHVELSFVRNKEESIYFSDSVEFNPSEVNNE.

Residues 1–22 (MKYYGKCISYISILILTFFIGG) form the signal peptide. Cysteine 23 carries the N-palmitoyl cysteine lipid modification. Cysteine 23 is lipidated: S-diacylglycerol cysteine.

It belongs to the staphylococcal tandem lipoprotein family.

The protein resides in the cell membrane. This is an uncharacterized protein from Staphylococcus epidermidis (strain ATCC 12228 / FDA PCI 1200).